The chain runs to 391 residues: MTLLQLGVCAGSIYTTFLIWGLLQERLTKTPYTAPATLLHPNPQPDYFRSPLFLNTVQALFSSVVACMYLLVRNRGSNKRVTQILGLHTLTPDGIAEKTQNGRASATNGKAAPTRSRWISPLLSRYILIAALQSTASQLGFLSLRYISYPTLTLAKSCKLVPVLVMNVVLYRRKFASYKYAVVGLVTLGIWLFMAFAPSKPGKKAKAPESSSLIGLVLCLLNLVLDGATNSTQDQVFSMFGRQTVSAGQMMLVMNAISAFLMALTLTLPIPLLSTPGQPTQLSTAIAFTQKHPEVWRDIIAYALAGAVGQVSIFETLERFGSLTLVSITVTRKLFTMLLSVVVYKHELSKLQWLGVAVVFAGIGIEAREKRREGLANKVIHDEKRALAKDA.

A run of 5 helical transmembrane segments spans residues leucine 3–leucine 23, leucine 52–valine 72, tyrosine 126–isoleucine 147, tyrosine 178–proline 198, and alanine 207–glycine 227. The N-linked (GlcNAc...) asparagine glycan is linked to asparagine 230. Helical transmembrane passes span methionine 250–isoleucine 270, aspartate 298–glutamate 318, leucine 323–valine 343, and glutamate 347–alanine 367.

The protein belongs to the nucleotide-sugar transporter family. SLC35B subfamily.

It is found in the endoplasmic reticulum membrane. May be involved in specific transport of UDP-Gal from the cytosol to the Golgi lumen. Involved in the maintenance of optimal conditions for the folding of secretory pathway proteins in the endoplasmic reticulum. This is UDP-galactose transporter homolog 1 (HUT1) from Mycosarcoma maydis (Corn smut fungus).